The primary structure comprises 299 residues: ATP phosphoribosyltransferase (299 aa).

It belongs to the ATP phosphoribosyltransferase family. Long subfamily. It depends on Mg(2+) as a cofactor.

The protein localises to the cytoplasm. It carries out the reaction 1-(5-phospho-beta-D-ribosyl)-ATP + diphosphate = 5-phospho-alpha-D-ribose 1-diphosphate + ATP. The protein operates within amino-acid biosynthesis; L-histidine biosynthesis; L-histidine from 5-phospho-alpha-D-ribose 1-diphosphate: step 1/9. Feedback inhibited by histidine. Its function is as follows. Catalyzes the condensation of ATP and 5-phosphoribose 1-diphosphate to form N'-(5'-phosphoribosyl)-ATP (PR-ATP). Has a crucial role in the pathway because the rate of histidine biosynthesis seems to be controlled primarily by regulation of HisG enzymatic activity. This Mannheimia succiniciproducens (strain KCTC 0769BP / MBEL55E) protein is ATP phosphoribosyltransferase.